A 180-amino-acid chain; its full sequence is Cytokinin-beta-glucosidase (180 aa).

In terms of tissue distribution, accumulates in young leaves and shoot tips.

Functionally, hydrolyzes cytokinin glucosides thus liberating free cytokinins. In Nicotiana tabacum (Common tobacco), this protein is Cytokinin-beta-glucosidase (TROLC).